The sequence spans 258 residues: Phosphoadenosine 5'-phosphosulfate reductase (258 aa).

The Nucleophile; cysteine thiosulfonate intermediate role is filled by Cys-244.

Belongs to the PAPS reductase family. CysH subfamily.

The protein resides in the cytoplasm. The enzyme catalyses [thioredoxin]-disulfide + sulfite + adenosine 3',5'-bisphosphate + 2 H(+) = [thioredoxin]-dithiol + 3'-phosphoadenylyl sulfate. It participates in sulfur metabolism; hydrogen sulfide biosynthesis; sulfite from sulfate: step 3/3. Catalyzes the formation of sulfite from phosphoadenosine 5'-phosphosulfate (PAPS) using thioredoxin as an electron donor. The sequence is that of Phosphoadenosine 5'-phosphosulfate reductase from Vibrio atlanticus (strain LGP32) (Vibrio splendidus (strain Mel32)).